Reading from the N-terminus, the 1040-residue chain is Beta-galactosidase (1040 aa).

The substrate site is built by Asn-111 and Asp-210. Asp-210 contacts Na(+). Residues Glu-427, His-429, and Glu-472 each contribute to the Mg(2+) site. Residues Glu-472 and 548-551 (EYAH) contribute to the substrate site. Residue Glu-472 is the Proton donor of the active site. The active-site Nucleophile is the Glu-548. Asn-608 serves as a coordination point for Mg(2+). Residues Phe-612 and Asp-615 each contribute to the Na(+) site. Substrate-binding residues include Asp-615 and Trp-1016.

The protein belongs to the glycosyl hydrolase 2 family. As to quaternary structure, homotetramer. Requires Mg(2+) as cofactor. Na(+) is required as a cofactor.

The enzyme catalyses Hydrolysis of terminal non-reducing beta-D-galactose residues in beta-D-galactosides.. This Pectobacterium atrosepticum (strain SCRI 1043 / ATCC BAA-672) (Erwinia carotovora subsp. atroseptica) protein is Beta-galactosidase.